The primary structure comprises 83 residues: Lipolysis-activating peptide 1-alpha chain (83 aa).

The first 21 residues, 1–21 (MNIILFYFMPILISLPGLLAS), serve as a signal peptide directing secretion. The LCN-type CS-alpha/beta domain occupies 22–83 (GTYPNDVYGL…LFWDVYKEHC (62 aa)). 3 cysteine pairs are disulfide-bonded: Cys35–Cys58, Cys44–Cys63, and Cys48–Cys65.

The protein belongs to the long (3 C-C) scorpion toxin superfamily. Monomer (edited version) and heterodimer (non-edited version) of this alpha chain and a beta chain (AC P0CI43). In terms of tissue distribution, expressed by the venom gland.

It is found in the secreted. The heterodimer non-edited LVP1 induces lipolysis in rat adipocytes. Induction of lipolysis by LVP1 appears to be mediated through the beta-2 adrenergic receptor pathway (ADRB2). Its function is as follows. The edited BmKBTx-like, similar to beta-toxins, may modulate voltage-gated sodium channels (Nav) and may block voltage-gated potassium channels (Kv). This Lychas mucronatus (Chinese swimming scorpion) protein is Lipolysis-activating peptide 1-alpha chain.